The following is a 322-amino-acid chain: uncharacterized protein (322 aa).

Disordered stretches follow at residues 1 to 51 (MARS…GAWA) and 107 to 130 (QERQ…DRPD). Basic and acidic residues predominate over residues 119 to 130 (LHLEPGNEDRPD).

In terms of tissue distribution, expressed in skin and fetal lung.

This is an uncharacterized protein from Homo sapiens (Human).